An 855-amino-acid polypeptide reads, in one-letter code: Potassium transporter 13 (855 aa).

Positions 1 to 67 (MFHVEEESSG…EMDSDEEDDN (67 aa)) are disordered. Over 1–105 (MFHVEEESSG…EIEDTGIGKK (105 aa)) the chain is Cytoplasmic. Positions 36 to 51 (EKDDYEVNEDYDDDGY) are enriched in acidic residues. The helical transmembrane segment at 106-126 (LILALQTLGVVFGDIGTSPLY) threads the bilayer. Residues 127-142 (TFTVMFRRSPINDKED) are Extracellular-facing. The chain crosses the membrane as a helical span at residues 143–163 (IIGALSLVIYTLILIPLVKYV). Residues 164-233 (HFVLWANDDG…RLEASMALKK (70 aa)) lie on the Cytoplasmic side of the membrane. A helical transmembrane segment spans residues 234–254 (LLLILVLAGTAMVIADAVVTP). At 255 to 268 (AMSVMSAIGGLKVG) the chain is on the extracellular side. Residues 269–289 (VGVIEQDQVVVISVSFLVILF) form a helical membrane-spanning segment. At 290–298 (SVQKYGTSK) the chain is on the cytoplasmic side. A helical membrane pass occupies residues 299–319 (LGLVLGPALLLWFFCLAGIGI). At 320–346 (YNLVKYDSSVFKAFNPAYIYFFFKRNS) the chain is on the extracellular side. The chain crosses the membrane as a helical span at residues 347-367 (VNAWYALGGCVLCATGSEAMF). Residues 368 to 379 (ADLSYFSVHSIQ) lie on the Cytoplasmic side of the membrane. Residues 380–400 (LTFILLVLPCLLLGYLGQAAY) form a helical membrane-spanning segment. Over 401–415 (LSENFSAAGDAFFSS) the chain is Extracellular. An N-linked (GlcNAc...) asparagine glycan is attached at N404. A helical membrane pass occupies residues 416–436 (VPSSLFWPVFLISNVAALIAS). The Cytoplasmic segment spans residues 437–467 (RAMTTATFTCIKQSIALGCFPRLKIIHTSKK). A helical transmembrane segment spans residues 468-488 (FIGQIYIPVLNWSLLVVCLIV). Residues 489–503 (VCSTSNIFAIGNAYG) lie on the Extracellular side of the membrane. Residues 504-524 (IAELGIMMTTTILVTLIMLLI) traverse the membrane as a helical segment. Topologically, residues 525-528 (WQTN) are cytoplasmic. Residues 529–549 (IIVVSMFAIVSLIVELVFFSS) traverse the membrane as a helical segment. Topologically, residues 550–553 (VCSS) are extracellular. The helical transmembrane segment at 554–574 (VADGSWIILVFATIMFLIMFV) threads the bilayer. The Cytoplasmic portion of the chain corresponds to 575–855 (WNYGSKLKYE…LMQVGMTYMV (281 aa)). S766 bears the Phosphoserine mark.

Belongs to the HAK/KUP transporter (TC 2.A.72.3) family.

It localises to the cell membrane. Functionally, probable potassium transporter. The sequence is that of Potassium transporter 13 (POT13) from Arabidopsis thaliana (Mouse-ear cress).